Reading from the N-terminus, the 208-residue chain is uncharacterized protein (208 aa).

The next 6 helical transmembrane spans lie at 5 to 25 (VIGI…KEAW), 41 to 61 (MLLI…IAAL), 69 to 89 (ANGI…LFFL), 123 to 143 (VLLG…ICGL), 150 to 170 (VFFF…TIAG), and 176 to 196 (NKLL…LVIY).

The protein localises to the cell membrane. This is an uncharacterized protein from Bacillus subtilis (strain 168).